We begin with the raw amino-acid sequence, 458 residues long: Protochlorophyllide reductase, chloroplastic (458 aa).

This sequence belongs to the short-chain dehydrogenases/reductases (SDR) family. POR subfamily.

Its subcellular location is the plastid. The protein resides in the chloroplast. It catalyses the reaction chlorophyllide a + NADP(+) = protochlorophyllide a + NADPH + H(+). Its pathway is porphyrin-containing compound metabolism; chlorophyll biosynthesis. Functionally, phototransformation of protochlorophyllide (Pchlide) to chlorophyllide (Chlide). This is Protochlorophyllide reductase, chloroplastic (PORA) from Marchantia paleacea (Liverwort).